The sequence spans 507 residues: ATP synthase subunit alpha, chloroplastic (507 aa).

ATP is bound at residue 170-177; that stretch reads GDRQTGKT.

It belongs to the ATPase alpha/beta chains family. As to quaternary structure, F-type ATPases have 2 components, CF(1) - the catalytic core - and CF(0) - the membrane proton channel. CF(1) has five subunits: alpha(3), beta(3), gamma(1), delta(1), epsilon(1). CF(0) has four main subunits: a, b, b' and c.

The protein resides in the plastid. The protein localises to the chloroplast thylakoid membrane. The catalysed reaction is ATP + H2O + 4 H(+)(in) = ADP + phosphate + 5 H(+)(out). Its function is as follows. Produces ATP from ADP in the presence of a proton gradient across the membrane. The alpha chain is a regulatory subunit. The polypeptide is ATP synthase subunit alpha, chloroplastic (Cucumis sativus (Cucumber)).